Reading from the N-terminus, the 242-residue chain is Ubiquinone biosynthesis O-methyltransferase (242 aa).

Positions 44, 64, 85, and 129 each coordinate S-adenosyl-L-methionine.

Belongs to the methyltransferase superfamily. UbiG/COQ3 family.

The enzyme catalyses a 3-demethylubiquinol + S-adenosyl-L-methionine = a ubiquinol + S-adenosyl-L-homocysteine + H(+). The catalysed reaction is a 3-(all-trans-polyprenyl)benzene-1,2-diol + S-adenosyl-L-methionine = a 2-methoxy-6-(all-trans-polyprenyl)phenol + S-adenosyl-L-homocysteine + H(+). Its pathway is cofactor biosynthesis; ubiquinone biosynthesis. Functionally, O-methyltransferase that catalyzes the 2 O-methylation steps in the ubiquinone biosynthetic pathway. The polypeptide is Ubiquinone biosynthesis O-methyltransferase (Salmonella arizonae (strain ATCC BAA-731 / CDC346-86 / RSK2980)).